The chain runs to 465 residues: FAD-dependent oxidoreductase pigF (465 aa).

The signal sequence occupies residues 1-17 (MMLLTLLILSSVGLAAA). Residues Asn-95, Asn-138, Asn-260, and Asn-327 are each glycosylated (N-linked (GlcNAc...) asparagine). Asp-444 carries GPI-anchor amidated aspartate lipidation. The propeptide at 445–465 (SASGIWNLTNAVVLPGLLTGL) is removed in mature form. N-linked (GlcNAc...) asparagine glycosylation occurs at Asn-451.

This sequence belongs to the beta-cyclopiazonate dehydrogenase family. Requires FAD as cofactor.

The protein localises to the cell membrane. The protein operates within secondary metabolite biosynthesis. Functionally, FAD-dependent oxidoreductase; part of the gene cluster that mediates the biosynthesis of azaphilone pigments (MonAzPs), a complex mixture of compounds with a common azaphilone skeleton very widely used as food colorants. Within the pathway, pigF desaturates C6(7) to afford the orange and red pigments from yellow pigments. The first step of the pathway is performed by the nrPKS pigA that forms the hexaketide precursor from successive condensations of five malonyl-CoA units, with a simple acetyl-CoA starter unit. The role of esterase pigG is not clear, but it may play at most a supplementary role in the formation of the benzaldehyde produced by the pigA nrPKS. This very reactive benzaldehyde is intercepted by the pigC ketoreductase that to provide the first stable enzyme-free MonAzPs intermediate, 6-(4-hydroxy-2-oxopentyl)-3-methyl-2,4-dioxocyclohexane carbaldehyde, also known as M7PKS-1. The FAD-dependent monooxygenase pigN hydroxylates M7PKS-1 at C-4, which triggers the formation of the pyran ring. PigJ, pigK and pigD are involved in the acetylation of the pyran ring. PigJ and pigK form the two subunits of a dedicated fungal FAS that produces the side chain fatty acyl moiety of MonAzPs and pigD transfers the fatty acyl chain to the C-4 alcohol. PigM and pigO are involved in the elimination of the omega-1 alcohol. PigM acts as an O-acetyltransferase that synthesizes the putative O-11 acetyl intermediate whereas pigO eliminates acetic acid to yield an intermediate with a C10(11) double bond. The dehydration of the C-11 alcohol followed by the reduction of the C6(7) double bond by the NAD(P)H-dependent oxidoreductase pigE increases the electrophilicity of the C-5 ketone of the resulting acyl benzopyran. This in turn sets up the C-5 ketone for an intramolecular Knoevenagel aldol condensation with the C-20 enol of the side chain. This condensation affords the characteristic linear tricyclic carbon skeletons of the yellow pigments that serve as the common precursors for the classical yellow pigments monascin and ankaflavin, orange pigments rubopunctatin and monascorubrin, and red pigments ribropunctamine and monascorubramine. The FAD-dependent oxidoreductase pigF is especially invoved in the biosynthesis of orange and red pigments via desaturation of C6(7). This Monascus ruber (Mold) protein is FAD-dependent oxidoreductase pigF.